Consider the following 946-residue polypeptide: Bifunctional glutamine synthetase adenylyltransferase/adenylyl-removing enzyme (946 aa).

The interval 1 to 440 (MKPLSSPLQQ…VFNELIGDDE (440 aa)) is adenylyl removase. Residues 449-946 (SEQWRELWQD…VSWQKWLVEE (498 aa)) are adenylyl transferase.

It belongs to the GlnE family. Requires Mg(2+) as cofactor.

It carries out the reaction [glutamine synthetase]-O(4)-(5'-adenylyl)-L-tyrosine + phosphate = [glutamine synthetase]-L-tyrosine + ADP. The catalysed reaction is [glutamine synthetase]-L-tyrosine + ATP = [glutamine synthetase]-O(4)-(5'-adenylyl)-L-tyrosine + diphosphate. Its function is as follows. Involved in the regulation of glutamine synthetase GlnA, a key enzyme in the process to assimilate ammonia. When cellular nitrogen levels are high, the C-terminal adenylyl transferase (AT) inactivates GlnA by covalent transfer of an adenylyl group from ATP to specific tyrosine residue of GlnA, thus reducing its activity. Conversely, when nitrogen levels are low, the N-terminal adenylyl removase (AR) activates GlnA by removing the adenylyl group by phosphorolysis, increasing its activity. The regulatory region of GlnE binds the signal transduction protein PII (GlnB) which indicates the nitrogen status of the cell. The protein is Bifunctional glutamine synthetase adenylyltransferase/adenylyl-removing enzyme of Escherichia coli (strain SMS-3-5 / SECEC).